The sequence spans 60 residues: Large ribosomal subunit protein bL32 (60 aa).

Residues 1 to 20 (MAVQKSRKSRSRRDMRRSHH) show a composition bias toward basic residues. Positions 1 to 60 (MAVQKSRKSRSRRDMRRSHHHMEVAELSIDATTGEKHRRHHMTKDGFYRGRQLFKASQED) are disordered.

Belongs to the bacterial ribosomal protein bL32 family.

This Psychrobacter sp. (strain PRwf-1) protein is Large ribosomal subunit protein bL32.